Reading from the N-terminus, the 261-residue chain is Indole-3-glycerol phosphate synthase (261 aa).

The protein belongs to the TrpC family.

The catalysed reaction is 1-(2-carboxyphenylamino)-1-deoxy-D-ribulose 5-phosphate + H(+) = (1S,2R)-1-C-(indol-3-yl)glycerol 3-phosphate + CO2 + H2O. Its pathway is amino-acid biosynthesis; L-tryptophan biosynthesis; L-tryptophan from chorismate: step 4/5. The polypeptide is Indole-3-glycerol phosphate synthase (Burkholderia cenocepacia (strain HI2424)).